The following is a 429-amino-acid chain: Glutamate-1-semialdehyde 2,1-aminomutase (429 aa).

Lys-267 carries the post-translational modification N6-(pyridoxal phosphate)lysine.

It belongs to the class-III pyridoxal-phosphate-dependent aminotransferase family. HemL subfamily. As to quaternary structure, homodimer. The cofactor is pyridoxal 5'-phosphate.

The protein localises to the cytoplasm. The enzyme catalyses (S)-4-amino-5-oxopentanoate = 5-aminolevulinate. It functions in the pathway porphyrin-containing compound metabolism; protoporphyrin-IX biosynthesis; 5-aminolevulinate from L-glutamyl-tRNA(Glu): step 2/2. This Xanthomonas oryzae pv. oryzae (strain MAFF 311018) protein is Glutamate-1-semialdehyde 2,1-aminomutase.